We begin with the raw amino-acid sequence, 129 residues long: Urease subunit beta (129 aa).

This sequence belongs to the urease beta subunit family. In terms of assembly, heterotrimer of UreA (gamma), UreB (beta) and UreC (alpha) subunits. Three heterotrimers associate to form the active enzyme.

The protein localises to the cytoplasm. The catalysed reaction is urea + 2 H2O + H(+) = hydrogencarbonate + 2 NH4(+). It participates in nitrogen metabolism; urea degradation; CO(2) and NH(3) from urea (urease route): step 1/1. This Photorhabdus laumondii subsp. laumondii (strain DSM 15139 / CIP 105565 / TT01) (Photorhabdus luminescens subsp. laumondii) protein is Urease subunit beta.